The sequence spans 828 residues: G-type lectin S-receptor-like serine/threonine-protein kinase At2g19130 (828 aa).

A signal peptide spans M1 to A22. The Bulb-type lectin domain occupies V23 to W146. The Extracellular segment spans residues V23 to G439. Residues N85, N113, N203, N234, N240, and N255 are each glycosylated (N-linked (GlcNAc...) asparagine). One can recognise an EGF-like domain in the interval P286–K322. 4 cysteine pairs are disulfide-bonded: C290–C302, C296–C310, C372–C394, and C376–C382. The PAN domain maps to C341–A422. Residues L440 to I460 form a helical membrane-spanning segment. The Cytoplasmic portion of the chain corresponds to L461–A828. One can recognise a Protein kinase domain in the interval K493–L770. Residues L499–V507 and K521 each bind ATP. A Phosphoserine modification is found at S527. Positions V582 to T600 are caM-binding. D619 serves as the catalytic Proton acceptor. Phosphothreonine is present on T653. The segment at E796–A828 is disordered. Over residues S797 to A828 the composition is skewed to low complexity. Phosphoserine is present on S815.

Belongs to the protein kinase superfamily. Ser/Thr protein kinase family.

The protein localises to the cell membrane. It catalyses the reaction L-seryl-[protein] + ATP = O-phospho-L-seryl-[protein] + ADP + H(+). The catalysed reaction is L-threonyl-[protein] + ATP = O-phospho-L-threonyl-[protein] + ADP + H(+). The polypeptide is G-type lectin S-receptor-like serine/threonine-protein kinase At2g19130 (Arabidopsis thaliana (Mouse-ear cress)).